A 189-amino-acid polypeptide reads, in one-letter code: Elongation factor P (189 aa).

N6-(3,6-diaminohexanoyl)-5-hydroxylysine is present on Lys-34.

This sequence belongs to the elongation factor P family. Post-translationally, may be beta-lysylated on the epsilon-amino group of Lys-34 by the combined action of EpmA and EpmB, and then hydroxylated on the C5 position of the same residue by EpmC (if this protein is present). Lysylation is critical for the stimulatory effect of EF-P on peptide-bond formation. The lysylation moiety may extend toward the peptidyltransferase center and stabilize the terminal 3-CCA end of the tRNA. Hydroxylation of the C5 position on Lys-34 may allow additional potential stabilizing hydrogen-bond interactions with the P-tRNA.

The protein localises to the cytoplasm. Its pathway is protein biosynthesis; polypeptide chain elongation. Its function is as follows. Involved in peptide bond synthesis. Alleviates ribosome stalling that occurs when 3 or more consecutive Pro residues or the sequence PPG is present in a protein, possibly by augmenting the peptidyl transferase activity of the ribosome. Modification of Lys-34 is required for alleviation. The polypeptide is Elongation factor P (Nitrosococcus oceani (strain ATCC 19707 / BCRC 17464 / JCM 30415 / NCIMB 11848 / C-107)).